The chain runs to 139 residues: Mannose-specific lectin (139 aa).

Residues 1–109 (DNILYSGETL…ARWATGTNIH (109 aa)) enclose the Bulb-type lectin domain. The alpha-D-mannopyranose site is built by Gln-26, Asp-28, Asn-30, Tyr-34, Asp-37, Lys-38, Trp-41, Ala-42, Asn-44, Gln-57, Asp-59, Asn-61, Tyr-65, Ile-72, Trp-73, Asn-76, Asn-83, Gln-89, Asp-91, Asn-93, Tyr-97, and Trp-102. Cys-29 and Cys-52 are oxidised to a cystine.

As to quaternary structure, homotetramer; antiparallel. In terms of tissue distribution, detected in bulbs (at protein level).

The protein localises to the secreted. Its function is as follows. Mannose-specific lectin. Displays antiviral activity and therefore may contribute to defense against infections. Shows agglutinating activity towards rabbit erythrocytes. This Narcissus tazetta (Cream narcissus) protein is Mannose-specific lectin.